The sequence spans 261 residues: Acetylglutamate kinase (261 aa).

Residues Gly46 to Gly47, Arg68, and Asn160 contribute to the substrate site.

This sequence belongs to the acetylglutamate kinase family. ArgB subfamily.

It is found in the cytoplasm. It carries out the reaction N-acetyl-L-glutamate + ATP = N-acetyl-L-glutamyl 5-phosphate + ADP. Its pathway is amino-acid biosynthesis; L-arginine biosynthesis; N(2)-acetyl-L-ornithine from L-glutamate: step 2/4. Its function is as follows. Catalyzes the ATP-dependent phosphorylation of N-acetyl-L-glutamate. This chain is Acetylglutamate kinase, found in Shewanella loihica (strain ATCC BAA-1088 / PV-4).